A 689-amino-acid polypeptide reads, in one-letter code: DNA polymerase epsilon subunit B (689 aa).

Residues 98-115 (EWSHEHPIQHEENILGRT) show a composition bias toward basic and acidic residues. Residues 98 to 155 (EWSHEHPIQHEENILGRTDDDENNSDDEMPIAADSSLQNVSLSSPMRQPTERDEYKQP) are disordered. Residues 116-126 (DDDENNSDDEM) are compositionally biased toward acidic residues. Ser-122 bears the Phosphoserine mark. Polar residues predominate over residues 132 to 144 (SSLQNVSLSSPMR). Ser-141 carries the post-translational modification Phosphoserine; by CDC28. The span at 146–155 (PTERDEYKQP) shows a compositional bias: basic and acidic residues. The residue at position 613 (Ser-613) is a Phosphoserine.

Belongs to the DNA polymerase epsilon subunit B family. In terms of assembly, DNA polymerase epsilon is a heterotetramer consisting of POL2, DPB2, DPB3 and DPB4. Post-translationally, phosphorylated in a cell cycle dependent manner during late G1 phase. Phosphorylation may facilitate the interaction with POL2 or the activity of DNA polymerase II. Phosphorylation is independent of DNA replication but dependent upon CDC28 in vivo. Both Ser-141 and Ser-613 are phosphorylated in vivo, but in vitro only Ser-141 is phosphorylated by CDC28.

Its subcellular location is the cytoplasm. The protein resides in the nucleus. As accessory component of the DNA polymerase epsilon complex participates in chromosomal DNA replication. It is required during synthesis of the leading and lagging DNA strands at the replication fork and binds at/or near replication origins and moves along DNA with the replication fork. It has 3'-5' proofreading exonuclease activity that correct errors arising during DNA replication. It is also involved in DNA synthesis during DNA repair. The polypeptide is DNA polymerase epsilon subunit B (DPB2) (Saccharomyces cerevisiae (strain ATCC 204508 / S288c) (Baker's yeast)).